The sequence spans 362 residues: Flagellar P-ring protein (362 aa).

A signal peptide spans 1 to 18; sequence MKHIALIVLYFLSFSVQA.

It belongs to the FlgI family. In terms of assembly, the basal body constitutes a major portion of the flagellar organelle and consists of four rings (L,P,S, and M) mounted on a central rod.

The protein resides in the periplasm. The protein localises to the bacterial flagellum basal body. In terms of biological role, assembles around the rod to form the L-ring and probably protects the motor/basal body from shearing forces during rotation. This chain is Flagellar P-ring protein, found in Marinomonas sp. (strain MWYL1).